The following is a 322-amino-acid chain: Phosphatidylserine decarboxylase proenzyme (322 aa).

Active-site charge relay system; for autoendoproteolytic cleavage activity residues include Asp90, His147, and Ser254. Ser254 functions as the Schiff-base intermediate with substrate; via pyruvic acid; for decarboxylase activity in the catalytic mechanism. Ser254 is modified (pyruvic acid (Ser); by autocatalysis). The disordered stretch occupies residues 292–322 (TPDAEPSPLPAEEIEAEHDASPLVDDKKDQV). Residues 308–322 (EHDASPLVDDKKDQV) are compositionally biased toward basic and acidic residues.

It belongs to the phosphatidylserine decarboxylase family. PSD-B subfamily. Prokaryotic type I sub-subfamily. As to quaternary structure, heterodimer of a large membrane-associated beta subunit and a small pyruvoyl-containing alpha subunit. It depends on pyruvate as a cofactor. Is synthesized initially as an inactive proenzyme. Formation of the active enzyme involves a self-maturation process in which the active site pyruvoyl group is generated from an internal serine residue via an autocatalytic post-translational modification. Two non-identical subunits are generated from the proenzyme in this reaction, and the pyruvate is formed at the N-terminus of the alpha chain, which is derived from the carboxyl end of the proenzyme. The autoendoproteolytic cleavage occurs by a canonical serine protease mechanism, in which the side chain hydroxyl group of the serine supplies its oxygen atom to form the C-terminus of the beta chain, while the remainder of the serine residue undergoes an oxidative deamination to produce ammonia and the pyruvoyl prosthetic group on the alpha chain. During this reaction, the Ser that is part of the protease active site of the proenzyme becomes the pyruvoyl prosthetic group, which constitutes an essential element of the active site of the mature decarboxylase.

The protein localises to the cell membrane. The enzyme catalyses a 1,2-diacyl-sn-glycero-3-phospho-L-serine + H(+) = a 1,2-diacyl-sn-glycero-3-phosphoethanolamine + CO2. It participates in phospholipid metabolism; phosphatidylethanolamine biosynthesis; phosphatidylethanolamine from CDP-diacylglycerol: step 2/2. In terms of biological role, catalyzes the formation of phosphatidylethanolamine (PtdEtn) from phosphatidylserine (PtdSer). The sequence is that of Phosphatidylserine decarboxylase proenzyme from Escherichia coli O7:K1 (strain IAI39 / ExPEC).